The following is a 72-amino-acid chain: Phosphonoacetate hydrolase (72 aa).

In terms of assembly, monomer. Requires Unlike bacterial phosphonoacetate hydrolase, does not require zinc as a cofactor. as cofactor.

It carries out the reaction phosphonoacetate + H2O = acetate + phosphate + H(+). Its activity is regulated as follows. Unaffected by EDTA or Ca(2+), Co(2+), Cu(2+), Mg(2+), Mn(2+), Ni(2+) and Zn(2+). In Penicillium oxalicum, this protein is Phosphonoacetate hydrolase.